A 705-amino-acid chain; its full sequence is Polyribonucleotide nucleotidyltransferase (705 aa).

Mg(2+)-binding residues include Asp-486 and Asp-492. The region spanning 553–612 (PRIYKIKINPEKIKDVIGKGGSVIRMLTEKTKSSIEIEDDGTVKVISTDIKNAQCALKKI) is the KH domain. The S1 motif domain maps to 622–690 (NKIYVAKITR…RYGRIRLSFT (69 aa)).

It belongs to the polyribonucleotide nucleotidyltransferase family. Component of the RNA degradosome, which is a multiprotein complex involved in RNA processing and mRNA degradation. It depends on Mg(2+) as a cofactor.

It localises to the cytoplasm. It catalyses the reaction RNA(n+1) + phosphate = RNA(n) + a ribonucleoside 5'-diphosphate. Its function is as follows. Involved in mRNA degradation. Catalyzes the phosphorolysis of single-stranded polyribonucleotides processively in the 3'- to 5'-direction. The chain is Polyribonucleotide nucleotidyltransferase from Wigglesworthia glossinidia brevipalpis.